Here is a 160-residue protein sequence, read N- to C-terminus: 2-C-methyl-D-erythritol 2,4-cyclodiphosphate synthase (160 aa).

2 residues coordinate a divalent metal cation: D11 and H13. Residues 11–13 (DVH) and 37–38 (HS) each bind 4-CDP-2-C-methyl-D-erythritol 2-phosphate. H45 is an a divalent metal cation binding site. 4-CDP-2-C-methyl-D-erythritol 2-phosphate is bound by residues 59 to 61 (DIG), 64 to 68 (FPDTD), 103 to 109 (AQAPKMA), 135 to 138 (TTTE), F142, and R145.

It belongs to the IspF family. As to quaternary structure, homotrimer. Requires a divalent metal cation as cofactor.

It catalyses the reaction 4-CDP-2-C-methyl-D-erythritol 2-phosphate = 2-C-methyl-D-erythritol 2,4-cyclic diphosphate + CMP. Its pathway is isoprenoid biosynthesis; isopentenyl diphosphate biosynthesis via DXP pathway; isopentenyl diphosphate from 1-deoxy-D-xylulose 5-phosphate: step 4/6. Its function is as follows. Involved in the biosynthesis of isopentenyl diphosphate (IPP) and dimethylallyl diphosphate (DMAPP), two major building blocks of isoprenoid compounds. Catalyzes the conversion of 4-diphosphocytidyl-2-C-methyl-D-erythritol 2-phosphate (CDP-ME2P) to 2-C-methyl-D-erythritol 2,4-cyclodiphosphate (ME-CPP) with a corresponding release of cytidine 5-monophosphate (CMP). The polypeptide is 2-C-methyl-D-erythritol 2,4-cyclodiphosphate synthase (Thiobacillus denitrificans (strain ATCC 25259 / T1)).